Consider the following 354-residue polypeptide: Photosystem II protein D1 1 (354 aa).

3 consecutive transmembrane segments (helical) span residues 29 to 46 (YIGW…TATT), 118 to 133 (HFLI…EWEL), and 142 to 156 (WIAV…AATA). Residue H118 coordinates chlorophyll a. Y126 is a binding site for pheophytin a. [CaMn4O5] cluster-binding residues include D170 and E189. A helical transmembrane segment spans residues 197 to 218 (FHQLGVAGVFGGALFSAMHGSL). H198 contributes to the chlorophyll a binding site. A quinone is bound by residues H215 and 264-265 (SF). Position 215 (H215) interacts with Fe cation. H272 lines the Fe cation pocket. The helical transmembrane segment at 274–288 (FLAAWPVIGIWFTAL) threads the bilayer. The [CaMn4O5] cluster site is built by H332, E333, D342, and A344. Positions 345–354 (AVEVAPAIRG) are excised as a propeptide.

Belongs to the reaction center PufL/M/PsbA/D family. PSII is composed of 1 copy each of membrane proteins PsbA, PsbB, PsbC, PsbD, PsbE, PsbF, PsbH, PsbI, PsbJ, PsbK, PsbL, PsbM, PsbT, PsbX, PsbY, PsbZ, Psb30/Ycf12, peripheral proteins PsbO, CyanoQ (PsbQ), PsbU, PsbV and a large number of cofactors. It forms dimeric complexes. Requires The D1/D2 heterodimer binds P680, chlorophylls that are the primary electron donor of PSII, and subsequent electron acceptors. It shares a non-heme iron and each subunit binds pheophytin, quinone, additional chlorophylls, carotenoids and lipids. D1 provides most of the ligands for the Mn4-Ca-O5 cluster of the oxygen-evolving complex (OEC). There is also a Cl(-1) ion associated with D1 and D2, which is required for oxygen evolution. The PSII complex binds additional chlorophylls, carotenoids and specific lipids. as cofactor. Tyr-161 forms a radical intermediate that is referred to as redox-active TyrZ, YZ or Y-Z. In terms of processing, C-terminally processed by CtpA; processing is essential to allow assembly of the oxygen-evolving complex and thus photosynthetic growth.

It is found in the cellular thylakoid membrane. It carries out the reaction 2 a plastoquinone + 4 hnu + 2 H2O = 2 a plastoquinol + O2. In terms of biological role, photosystem II (PSII) is a light-driven water:plastoquinone oxidoreductase that uses light energy to abstract electrons from H(2)O, generating O(2) and a proton gradient subsequently used for ATP formation. It consists of a core antenna complex that captures photons, and an electron transfer chain that converts photonic excitation into a charge separation. The D1/D2 (PsbA/PsbD) reaction center heterodimer binds P680, the primary electron donor of PSII as well as several subsequent electron acceptors. This chain is Photosystem II protein D1 1, found in Synechococcus sp. (strain JA-3-3Ab) (Cyanobacteria bacterium Yellowstone A-Prime).